Consider the following 201-residue polypeptide: PLASMODESMATA CALLOSE-BINDING PROTEIN 1 (201 aa).

The signal sequence occupies residues 1–19; the sequence is MAALVLSLLLLSLAGHSSA. Cysteine 22 and cysteine 84 are disulfide-bonded. The span at 107 to 141 shows a compositional bias: low complexity; sequence SASGSSGSTTVTPGTTNPKGSPTTTTLPGSGTNSP. A disordered region spans residues 107 to 164; the sequence is SASGSSGSTTVTPGTTNPKGSPTTTTLPGSGTNSPYSGNPTNGVFGGNSTGGTTGTGI. Gly residues predominate over residues 150–161; that stretch reads VFGGNSTGGTTG. The N-linked (GlcNAc...) asparagine glycan is linked to asparagine 154. A lipid anchor (GPI-anchor amidated serine) is attached at serine 172. Positions 173 to 201 are cleaved as a propeptide — removed in mature form; that stretch reads SAFALKNSSKLFICLLLIASSGFCSFLML. Asparagine 179 carries N-linked (GlcNAc...) asparagine glycosylation.

Post-translationally, contains two additional disulfide bonds. As to expression, expressed in the shoot apical region and in young leaves but also detected in the laminar and vasculature of mature leaves.

Its subcellular location is the cell membrane. The protein localises to the cell junction. The protein resides in the plasmodesma. Able to bind (1-&gt;3)-beta-D-glucans (laminarin). Probably involved in cell-to-cell trafficking regulation. The protein is PLASMODESMATA CALLOSE-BINDING PROTEIN 1 (PDCB1) of Arabidopsis thaliana (Mouse-ear cress).